Reading from the N-terminus, the 313-residue chain is Cilia- and flagella-associated protein 36 (313 aa).

S85 and S147 each carry phosphoserine. Positions 147–187 form a coiled coil; sequence SDLEQEEMKILKEVLRKSKEEYDQEEERKRKKQLSEAKTEE. Disordered stretches follow at residues 165 to 204 and 262 to 292; these read KEEY…SQGD and KIKQ…TAEE. Positions 179–189 are enriched in basic and acidic residues; sequence QLSEAKTEEHP. Polar residues predominate over residues 192-203; that stretch reads ANETAKMSNSQG. Residue S201 is modified to Phosphoserine. The span at 271–292 shows a compositional bias: basic and acidic residues; sequence QKGKPAGEVEEMTEKPEMTAEE.

This sequence belongs to the CFAP36 family. In terms of assembly, interacts with ARL3.

It localises to the nucleus. It is found in the cytoplasm. The protein resides in the cell projection. Its subcellular location is the cilium. The protein localises to the flagellum. Functionally, may act as an effector for ARL3. The sequence is that of Cilia- and flagella-associated protein 36 from Bos taurus (Bovine).